Consider the following 90-residue polypeptide: Large ribosomal subunit protein bL27 (90 aa).

Residues 1–22 form a disordered region; it reads MAHKKAGGSTRNGRDSNPKMLG.

Belongs to the bacterial ribosomal protein bL27 family.

The chain is Large ribosomal subunit protein bL27 from Coxiella burnetii (strain CbuK_Q154) (Coxiella burnetii (strain Q154)).